Consider the following 237-residue polypeptide: MAMFRSLVASAQQRQPPAGPAGGDSGLEAQFSCPICLEVYHRPVAIGSCGHTFCGECLQPCLQVPSPLCPLCRLPFDPKKVDKATHVEKQLSSYKAPCRGCNKKVTLAKMRAHISSCLKVQEQMANCPKFVPVVPTSQPIPSNIPNRSTFACPYCGARNLDQQELVKHCVESHRSDPNRVVCPICSAMPWGDPSYKSANFLQHLLHRHKFSYDTFVDYSIDEEAAFQAALALSLSEN.

Residues 33 to 73 form an RING-type zinc finger; the sequence is CPICLEVYHRPVAIGSCGHTFCGECLQPCLQVPSPLCPLCR. Zn(2+)-binding residues include Cys98, Cys101, His113, and Cys117. The C2HC RNF-type zinc finger occupies 98 to 117; it reads CRGCNKKVTLAKMRAHISSC. Positions 221–237 constitute a UIM domain; the sequence is DEEAAFQAALALSLSEN.

It is found in the cytoplasm. The enzyme catalyses S-ubiquitinyl-[E2 ubiquitin-conjugating enzyme]-L-cysteine + [acceptor protein]-L-lysine = [E2 ubiquitin-conjugating enzyme]-L-cysteine + N(6)-ubiquitinyl-[acceptor protein]-L-lysine.. It participates in protein modification; protein ubiquitination. Its function is as follows. E3 ubiquitin-protein ligase that promotes the ubiquitination of different substrates. In turn, participates in different biological processes including interferon production or autophagy. Plays a role in the activation of RNA virus-induced interferon-beta production by promoting the ubiquitination of TRAF3 and TRAF6. Also plays a role in the early recruitment of autophagy adapters to bacteria. Mediates 'Lys-29' and 'Lys-33'-linked ubiquitination of SQSTM1 leading to xenophagic targeting of bacteria and inhibition of their replication. The chain is E3 ubiquitin-protein ligase RNF166 (Rnf166) from Mus musculus (Mouse).